The primary structure comprises 442 residues: 3-ketoacyl-CoA thiolase (442 aa).

The Acyl-thioester intermediate role is filled by Cys-105. Active-site proton acceptor residues include His-398 and Cys-428.

Belongs to the thiolase-like superfamily. Thiolase family. Heterotetramer of two alpha chains (FadJ) and two beta chains (FadI).

Its subcellular location is the cytoplasm. The enzyme catalyses an acyl-CoA + acetyl-CoA = a 3-oxoacyl-CoA + CoA. The protein operates within lipid metabolism; fatty acid beta-oxidation. Functionally, catalyzes the final step of fatty acid oxidation in which acetyl-CoA is released and the CoA ester of a fatty acid two carbons shorter is formed. This chain is 3-ketoacyl-CoA thiolase, found in Aliivibrio fischeri (strain MJ11) (Vibrio fischeri).